Consider the following 140-residue polypeptide: Large ribosomal subunit protein uL11 (140 aa).

The protein belongs to the universal ribosomal protein uL11 family. Part of the ribosomal stalk of the 50S ribosomal subunit. Interacts with L10 and the large rRNA to form the base of the stalk. L10 forms an elongated spine to which L12 dimers bind in a sequential fashion forming a multimeric L10(L12)X complex. Post-translationally, one or more lysine residues are methylated.

Its function is as follows. Forms part of the ribosomal stalk which helps the ribosome interact with GTP-bound translation factors. The polypeptide is Large ribosomal subunit protein uL11 (Desulfovibrio desulfuricans (strain ATCC 27774 / DSM 6949 / MB)).